Consider the following 245-residue polypeptide: Probable transcriptional regulatory protein MAG6590 (245 aa).

Belongs to the TACO1 family.

It localises to the cytoplasm. In Mycoplasmopsis agalactiae (strain NCTC 10123 / CIP 59.7 / PG2) (Mycoplasma agalactiae), this protein is Probable transcriptional regulatory protein MAG6590.